Consider the following 159-residue polypeptide: UPF0225 protein plu2503 (159 aa).

Belongs to the UPF0225 family.

This Photorhabdus laumondii subsp. laumondii (strain DSM 15139 / CIP 105565 / TT01) (Photorhabdus luminescens subsp. laumondii) protein is UPF0225 protein plu2503.